Reading from the N-terminus, the 265-residue chain is uncharacterized protein (265 aa).

Disordered stretches follow at residues 162–183 (VTKKNASNSNGNEGTLTVNNDQ) and 196–239 (AKTN…DKEI). 2 stretches are compositionally biased toward polar residues: residues 165-183 (KNASNSNGNEGTLTVNNDQ) and 213-233 (QSTSLIQLKEGSANTTEGNAS).

The protein belongs to the MG185/MG260 family.

This is an uncharacterized protein from Mycoplasma pneumoniae (strain ATCC 29342 / M129 / Subtype 1) (Mycoplasmoides pneumoniae).